The following is a 436-amino-acid chain: tRNA-2-methylthio-N(6)-dimethylallyladenosine synthase (436 aa).

The 117-residue stretch at 5 to 121 folds into the MTTase N-terminal domain; sequence RKLFIKTYGC…LPDMLERTEG (117 aa). Residues Cys-14, Cys-50, Cys-84, Cys-158, Cys-162, and Cys-165 each contribute to the [4Fe-4S] cluster site. Residues 144 to 374 form the Radical SAM core domain; that stretch reads ATRGPAAFLT…TEQQRAAQMA (231 aa). In terms of domain architecture, TRAM spans 373-435; that stretch reads MAMVGREVGV…PNSLAGERLG (63 aa).

Belongs to the methylthiotransferase family. MiaB subfamily. In terms of assembly, monomer. [4Fe-4S] cluster serves as cofactor.

The protein localises to the cytoplasm. It carries out the reaction N(6)-dimethylallyladenosine(37) in tRNA + (sulfur carrier)-SH + AH2 + 2 S-adenosyl-L-methionine = 2-methylsulfanyl-N(6)-dimethylallyladenosine(37) in tRNA + (sulfur carrier)-H + 5'-deoxyadenosine + L-methionine + A + S-adenosyl-L-homocysteine + 2 H(+). Its function is as follows. Catalyzes the methylthiolation of N6-(dimethylallyl)adenosine (i(6)A), leading to the formation of 2-methylthio-N6-(dimethylallyl)adenosine (ms(2)i(6)A) at position 37 in tRNAs that read codons beginning with uridine. The protein is tRNA-2-methylthio-N(6)-dimethylallyladenosine synthase of Cereibacter sphaeroides (strain ATCC 17023 / DSM 158 / JCM 6121 / CCUG 31486 / LMG 2827 / NBRC 12203 / NCIMB 8253 / ATH 2.4.1.) (Rhodobacter sphaeroides).